A 340-amino-acid polypeptide reads, in one-letter code: tRNA N6-adenosine threonylcarbamoyltransferase (340 aa).

Fe cation-binding residues include histidine 109 and histidine 113. Substrate is bound by residues alanine 132–alanine 136, aspartate 165, glycine 178, and asparagine 277. Aspartate 302 is a binding site for Fe cation.

It belongs to the KAE1 / TsaD family. The cofactor is Fe(2+).

The protein localises to the cytoplasm. The enzyme catalyses L-threonylcarbamoyladenylate + adenosine(37) in tRNA = N(6)-L-threonylcarbamoyladenosine(37) in tRNA + AMP + H(+). In terms of biological role, required for the formation of a threonylcarbamoyl group on adenosine at position 37 (t(6)A37) in tRNAs that read codons beginning with adenine. Is involved in the transfer of the threonylcarbamoyl moiety of threonylcarbamoyl-AMP (TC-AMP) to the N6 group of A37, together with TsaE and TsaB. TsaD likely plays a direct catalytic role in this reaction. The polypeptide is tRNA N6-adenosine threonylcarbamoyltransferase (Chlamydia muridarum (strain MoPn / Nigg)).